Here is a 288-residue protein sequence, read N- to C-terminus: Quinate/shikimate dehydrogenase (288 aa).

Substrate is bound by residues K71 and D107. NAD(+) contacts are provided by residues A132 to A135, N155 to D158, K205, C232 to N235, and G255.

Belongs to the shikimate dehydrogenase family. Homodimer.

The catalysed reaction is L-quinate + NAD(+) = 3-dehydroquinate + NADH + H(+). The enzyme catalyses L-quinate + NADP(+) = 3-dehydroquinate + NADPH + H(+). It carries out the reaction shikimate + NADP(+) = 3-dehydroshikimate + NADPH + H(+). It catalyses the reaction shikimate + NAD(+) = 3-dehydroshikimate + NADH + H(+). It functions in the pathway metabolic intermediate biosynthesis; chorismate biosynthesis; chorismate from D-erythrose 4-phosphate and phosphoenolpyruvate: step 4/7. Functionally, the actual biological function of YdiB remains unclear, nor is it known whether 3-dehydroshikimate or quinate represents the natural substrate. Catalyzes the reversible NAD-dependent reduction of both 3-dehydroshikimate (DHSA) and 3-dehydroquinate to yield shikimate (SA) and quinate, respectively. It can use both NAD or NADP for catalysis, however it has higher catalytic efficiency with NAD. The chain is Quinate/shikimate dehydrogenase from Escherichia coli O81 (strain ED1a).